The primary structure comprises 80 residues: Acyl carrier protein (80 aa).

Residues 4 to 79 (EEILQKVCSI…DAVKFIEEKK (76 aa)) form the Carrier domain. S39 carries the O-(pantetheine 4'-phosphoryl)serine modification.

This sequence belongs to the acyl carrier protein (ACP) family. In terms of processing, 4'-phosphopantetheine is transferred from CoA to a specific serine of apo-ACP by AcpS. This modification is essential for activity because fatty acids are bound in thioester linkage to the sulfhydryl of the prosthetic group.

Its subcellular location is the cytoplasm. It functions in the pathway lipid metabolism; fatty acid biosynthesis. Its function is as follows. Carrier of the growing fatty acid chain in fatty acid biosynthesis. The polypeptide is Acyl carrier protein (Prochlorococcus marinus subsp. pastoris (strain CCMP1986 / NIES-2087 / MED4)).